Here is a 389-residue protein sequence, read N- to C-terminus: Succinate--CoA ligase [ADP-forming] subunit beta (389 aa).

The region spanning Lys-9–Lys-236 is the ATP-grasp domain. Residues Lys-45, Gly-52–Gly-54, Ser-94, and Glu-99 contribute to the ATP site. Residues Asn-191 and Asp-205 each contribute to the Mg(2+) site. Substrate contacts are provided by residues Asn-256 and Gly-318 to Thr-320.

Belongs to the succinate/malate CoA ligase beta subunit family. In terms of assembly, heterotetramer of two alpha and two beta subunits. The cofactor is Mg(2+).

The enzyme catalyses succinate + ATP + CoA = succinyl-CoA + ADP + phosphate. It catalyses the reaction GTP + succinate + CoA = succinyl-CoA + GDP + phosphate. Its pathway is carbohydrate metabolism; tricarboxylic acid cycle; succinate from succinyl-CoA (ligase route): step 1/1. Functionally, succinyl-CoA synthetase functions in the citric acid cycle (TCA), coupling the hydrolysis of succinyl-CoA to the synthesis of either ATP or GTP and thus represents the only step of substrate-level phosphorylation in the TCA. The beta subunit provides nucleotide specificity of the enzyme and binds the substrate succinate, while the binding sites for coenzyme A and phosphate are found in the alpha subunit. In Rhodococcus opacus (strain B4), this protein is Succinate--CoA ligase [ADP-forming] subunit beta.